We begin with the raw amino-acid sequence, 552 residues long: Protein FAM234A (552 aa).

Positions 1–40 (MMDDKDLEAEIHPLKNEDKKSQENLGNLPKTEDNLKNKPV) are disordered. Residues 1–49 (MMDDKDLEAEIHPLKNEDKKSQENLGNLPKTEDNLKNKPVPSRLSRCRT) are Cytoplasmic-facing. Residues 8 to 22 (EAEIHPLKNEDKKSQ) show a composition bias toward basic and acidic residues. The residue at position 21 (Ser21) is a Phosphoserine. A helical; Signal-anchor for type II membrane protein membrane pass occupies residues 50–70 (VAFFLSLFICLFVVFVLSFII). Residues 71–552 (PCPDRPSSED…FSRLRYRSEV (482 aa)) are Extracellular-facing. 4 N-linked (GlcNAc...) asparagine glycosylation sites follow: Asn116, Asn119, Asn314, and Asn473.

This sequence belongs to the FAM234 family.

The protein localises to the membrane. The sequence is that of Protein FAM234A (Fam234a) from Rattus norvegicus (Rat).